Reading from the N-terminus, the 1187-residue chain is ATP-dependent DNA helicase MER3 (1187 aa).

A disordered region spans residues 1–41 (MKTKFDRLGTGKRSRPSPNNIDFNDQSATFKRNKKNSRQPS). A compositionally biased stretch (polar residues) spans 16-30 (PSPNNIDFNDQSATF). The Helicase ATP-binding domain occupies 148–322 (PSIYESNENC…WLKTNNELPA (175 aa)). Position 161-168 (161-168 (SPTGSGKT)) interacts with ATP. The DEIH box motif lies at 268–271 (DEIH). Residues 360–542 (KLIEIIEKHA…NLIEHLAAET (183 aa)) form the Helicase C-terminal domain. The SEC63 domain maps to 616–922 (STAYGNAMTR…PKLEKIEFSI (307 aa)). The segment at 1039–1054 (CFHSCKDKTQCRHLCC) adopts a C4-type zinc-finger fold. The interval 1146–1187 (NCPEIIPIDLESSDSYSSNTAASSISDPNGDLDFLGSDIEFE) is disordered. The span at 1158 to 1171 (SDSYSSNTAASSIS) shows a compositional bias: low complexity.

It belongs to the helicase family. SKI2 subfamily. Oligomerizes. Requires a divalent metal cation as cofactor. The cofactor is Zn(2+).

It is found in the nucleus. It carries out the reaction Couples ATP hydrolysis with the unwinding of duplex DNA by translocating in the 3'-5' direction.. The catalysed reaction is ATP + H2O = ADP + phosphate + H(+). Its function is as follows. DNA-dependent ATPase and 3'-5' DNA helicase. Required in the control of double strand break transition and crossover during meiosis. ATPase is slightly better stimulated by single-stranded (ss) than double-stranded (ds)DNA. Unwinds Holliday junction (HJ) DNA to Y-DNA and to ssDNA. Efficient unwinding requires 6 nucleotides of 3'-ssDNA; seems to initiate unwinding from blunt ends when they open slightly. Binds HJ, dsDNA, ssDNA and 3'- and 5-overhang DNA. In Saccharomyces cerevisiae (strain ATCC 204508 / S288c) (Baker's yeast), this protein is ATP-dependent DNA helicase MER3.